Consider the following 192-residue polypeptide: Epididymal-specific lipocalin-5 (192 aa).

An N-terminal signal peptide occupies residues M1–G26. Cysteines 89 and 183 form a disulfide.

It belongs to the calycin superfamily. Lipocalin family. 2 different forms with differently processed N-termini exist. As to expression, epididymal fluid of the caudal and corpus regions (at protein level).

It localises to the secreted. Associates with spermatozoa in the epididymal fluid but does not bind tightly to them. Binds both all-trans and 13-cis retinoic acid. May act as a retinoid carrier protein which is required for epididymal function and/or sperm maturation. The sequence is that of Epididymal-specific lipocalin-5 from Mus musculus (Mouse).